A 247-amino-acid chain; its full sequence is Sec-independent protein translocase protein TatC (247 aa).

Transmembrane regions (helical) follow at residues isoleucine 21–isoleucine 41, alanine 71–valine 91, isoleucine 109–isoleucine 129, phenylalanine 154–leucine 174, and phenylalanine 195–isoleucine 215.

This sequence belongs to the TatC family. Forms a complex with TatA.

Its subcellular location is the cell membrane. In terms of biological role, part of the twin-arginine translocation (Tat) system that transports large folded proteins containing a characteristic twin-arginine motif in their signal peptide across membranes. The protein is Sec-independent protein translocase protein TatC of Listeria innocua serovar 6a (strain ATCC BAA-680 / CLIP 11262).